Consider the following 244-residue polypeptide: Ureidoacrylate amidohydrolase RutB (244 aa).

Residue aspartate 38 is the Proton acceptor of the active site. Lysine 147 is an active-site residue. Catalysis depends on cysteine 180, which acts as the Nucleophile.

Belongs to the isochorismatase family. RutB subfamily.

It catalyses the reaction (Z)-3-ureidoacrylate + H2O + H(+) = (Z)-3-aminoacrylate + NH4(+) + CO2. The catalysed reaction is (Z)-3-ureidoacrylate + H2O = (Z)-3-aminoacrylate + carbamate + H(+). The enzyme catalyses (Z)-2-methylureidoacrylate + H2O + H(+) = (Z)-2-methylaminoacrylate + NH4(+) + CO2. Its function is as follows. Hydrolyzes ureidoacrylate to form aminoacrylate and carbamate. The carbamate hydrolyzes spontaneously, thereby releasing one of the nitrogen atoms of the pyrimidine ring as ammonia and one of its carbon atoms as CO2. The protein is Ureidoacrylate amidohydrolase RutB of Escherichia coli O6:H1 (strain CFT073 / ATCC 700928 / UPEC).